The primary structure comprises 819 residues: Cadherin-24 (819 aa).

A signal peptide spans 1–19 (MWGLVRLLLAWLGGWGCMG). Positions 21-44 (LAAPARAWAGSREHPGPALLRTRR) are excised as a propeptide. Over 45 to 641 (SWVWNQFFVI…LSAAGLSTGA (597 aa)) the chain is Extracellular. 5 consecutive Cadherin domains span residues 46 to 150 (WVWN…PPIF), 151 to 259 (PLGP…PPKF), 260 to 374 (PQSL…PPAF), 375 to 517 (TQAA…APQL), and 517 to 630 (LAEP…WPEA). N446, N548, and N563 each carry an N-linked (GlcNAc...) asparagine glycan. The helical transmembrane segment at 642-662 (LLAIITCVGALLALVVLFVAL) threads the bilayer. The Cytoplasmic segment spans residues 663–819 (RRQKQEALMV…LYGAKEPPAP (157 aa)). Positions 768–800 (YEGRGSSCGSLSSLGSGSEAGGAPGPAEPLDDW) are disordered. Positions 771–784 (RGSSCGSLSSLGSG) are enriched in low complexity.

Associates with alpha-, beta- and delta-catenins.

Its subcellular location is the cell membrane. Cadherins are calcium-dependent cell adhesion proteins. They preferentially interact with themselves in a homophilic manner in connecting cells; cadherins may thus contribute to the sorting of heterogeneous cell types. Cadherin-24 mediate strong cell-cell adhesion. The sequence is that of Cadherin-24 (CDH24) from Homo sapiens (Human).